The sequence spans 320 residues: ATPase H(+)-transporting accessory protein 2 (320 aa).

A signal peptide spans 1 to 17; the sequence is MLRVFVIFSLFIAAINA. At 18 to 277 the chain is on the lumenal side; the sequence is SGEFTVLNRP…YGSDYPVIFN (260 aa). A helical transmembrane segment spans residues 278 to 298; it reads IILWFMVVFGLSLLAICYAIA. Over 299 to 320 the chain is Cytoplasmic; sequence AMDPGRDSIIYRMTSTRIKKDN. The short motif at 317–320 is the Mediates retrograde transport to the ER element; that stretch reads KKDN.

Interacts with fz and fz2. Interacts (via N-terminus) with stan. As an accessory component of the multisubunit proton-transporting vacuolar (V)-ATPase protein pump, might interacts with VhaAC45. Proteolytically cleaved by a furin-like convertase in the trans-Golgi network to generate N- and C-terminal fragments. Cleavage is reduced in the fat body.

Its subcellular location is the cell membrane. The protein resides in the endoplasmic reticulum membrane. The protein localises to the vesicle. It localises to the apical cell membrane. It is found in the golgi apparatus membrane. Its subcellular location is the secreted. Functionally, multifunctional protein which functions as a transmembrane receptor in the planar cell polarity (PCP) and is involved in the assembly of the proton-transporting vacuolar (V)-ATPase protein pump. As transmembrane receptor mediates fz/PCP signaling through interaction with fz and stabilizes asymmetric PCP domains through its interaction with stan. Also mediates Wnt/beta-cat signaling through interaction with fz/fz2. Probably by controlling the assembly of the V-ATPase pump and thus the acidification of the endo-lysosomal system, plays a role in many neuronal processes including synapse morphology and synaptic transmission. Its function is as follows. Stabilizes asymmetric Planar Cell Polarity (PCP) domains through its interaction with stan. The chain is ATPase H(+)-transporting accessory protein 2 from Drosophila melanogaster (Fruit fly).